The sequence spans 438 residues: MYHDYASKLLADYRSDPPLWESDLPRHNRYSDNILNSRYCGNKNGAAPVYNEYTNSPGQAEKGLQLSDLRNFSFMLNPQHKNIGYGDAQDLEPYSSIPKNKLFNHFKNYRPAFSTHTENLIKRNVVRTEKKTFPQVSGLKDTQKNCLTQPSSLPSLKNPKNSSVPSTRFSEHTKFFSYEDLPKLRTKGTIKHEQHLGDQMPGQCYNGYIPHQDVYNILCLAHKLPASVEKEIAGRGIPLGNPHVKPNIEQELIKSTSTYTGVPILGPLPPKDSQHGREHQEFSANRHMLQVSNILHSVFANHSIKPQILEDIPVLNAQLASIKPVSPFLNKAYQTHYMENIVTLVPRFKSIANYSSPIPNYSKRNNGQAEYFDTSKQTISRHNNYIPKYTGGIGDSKLDSTFPKDFNASSVPLTSAEKDHSLRGDNSACCISSISPSL.

Residues proline 134–threonine 167 form a disordered region. Polar residues predominate over residues lysine 144–threonine 167.

This sequence belongs to the asfivirus p49 structural protein family.

It localises to the virion. Together with the penton and the other minor capsid proteins (M1249L, p17), forms a complicated network immediately below the outer capsid shell, stabilizing the whole capsid. Plays an essential role in the formation of infectious virus particles. Especially required for the formation of the capsid vertices. During virion assembly, associates with the membrane and probably mediates the docking of the penton complex to the inner membrane, where it recruits the capsomers to form the penton core. The polypeptide is Minor capsid protein p49 (Ornithodoros (relapsing fever ticks)).